The sequence spans 1219 residues: DNA ligase 4 (1219 aa).

ATP is bound by residues Glu-251, Lys-253, Arg-258, Arg-273, Glu-303, Phe-342, Glu-418, Lys-423, Arg-434, Lys-440, and Lys-442. The active-site N6-AMP-lysine intermediate is the Lys-253. Glu-303 is a binding site for Mg(2+). Glu-418 is a Mg(2+) binding site. The tract at residues 604–632 (NGTTQKQKESESTQDNPKVNKSSKRGEKK) is disordered. BRCT domains lie at 651-739 (GKTS…PKYF) and 807-909 (VYFY…VYTL). Disordered regions lie at residues 914–1126 (MEES…MDMK) and 1146–1197 (IPSQ…SDVV). The span at 932-960 (VASQGSAQTKEPASSKIAITSSRGRSNTR) shows a compositional bias: polar residues. The segment covering 1042-1051 (QRSRRGKKAA) has biased composition (basic residues). Positions 1056-1065 (DESDENDELD) are enriched in acidic residues. Basic and acidic residues-rich tracts occupy residues 1084 to 1096 (VENE…DIAK) and 1117 to 1126 (RNAKTEMDMK). The segment covering 1148–1159 (SQKTTETSNRTT) has biased composition (polar residues).

The protein belongs to the ATP-dependent DNA ligase family. As to quaternary structure, interacts with XRCC4 via its tandem BRCT domains. Interacts with POLL. Requires Mg(2+) as cofactor. Widely expressed, with higher levels in young flowers and roots.

Its subcellular location is the nucleus. It catalyses the reaction ATP + (deoxyribonucleotide)n-3'-hydroxyl + 5'-phospho-(deoxyribonucleotide)m = (deoxyribonucleotide)n+m + AMP + diphosphate.. In terms of biological role, DNA ligase involved in DNA non-homologous end joining (NHEJ); required for double-strand break (DSB) repair. May be involved for T-DNA integration even if not absolutely required. Seems to be dispensable under normal growth conditions. This Arabidopsis thaliana (Mouse-ear cress) protein is DNA ligase 4 (LIG4).